Reading from the N-terminus, the 207-residue chain is Cytochrome c biogenesis ATP-binding export protein CcmA (207 aa).

The ABC transporter domain maps to leucine 3–valine 206. Glycine 35–serine 42 lines the ATP pocket.

It belongs to the ABC transporter superfamily. CcmA exporter (TC 3.A.1.107) family. In terms of assembly, the complex is composed of two ATP-binding proteins (CcmA) and two transmembrane proteins (CcmB).

The protein localises to the cell inner membrane. It carries out the reaction heme b(in) + ATP + H2O = heme b(out) + ADP + phosphate + H(+). In terms of biological role, part of the ABC transporter complex CcmAB involved in the biogenesis of c-type cytochromes; once thought to export heme, this seems not to be the case, but its exact role is uncertain. Responsible for energy coupling to the transport system. The protein is Cytochrome c biogenesis ATP-binding export protein CcmA of Rhizobium meliloti (strain 1021) (Ensifer meliloti).